The sequence spans 101 residues: NADH-quinone oxidoreductase subunit K (101 aa).

The next 3 membrane-spanning stretches (helical) occupy residues 5 to 25 (PNWYLALSAVLFTIGTFGVLF), 30 to 50 (IVVLMSVELMLNAVNLTLVTF), and 62 to 82 (LVFFSIAVAAAEAAVGLAIVI).

This sequence belongs to the complex I subunit 4L family. As to quaternary structure, NDH-1 is composed of 14 different subunits. Subunits NuoA, H, J, K, L, M, N constitute the membrane sector of the complex.

Its subcellular location is the cell inner membrane. The catalysed reaction is a quinone + NADH + 5 H(+)(in) = a quinol + NAD(+) + 4 H(+)(out). Functionally, NDH-1 shuttles electrons from NADH, via FMN and iron-sulfur (Fe-S) centers, to quinones in the respiratory chain. The immediate electron acceptor for the enzyme in this species is believed to be a menaquinone. Couples the redox reaction to proton translocation (for every two electrons transferred, four hydrogen ions are translocated across the cytoplasmic membrane), and thus conserves the redox energy in a proton gradient. In Salinibacter ruber (strain DSM 13855 / M31), this protein is NADH-quinone oxidoreductase subunit K.